A 283-amino-acid chain; its full sequence is Reaction center protein L chain (283 aa).

3 helical membrane-spanning segments follow: residues 33–56, 85–113, and 116–141; these read GFFG…GASQ, GLWQ…RKLG, and YHVP…LLMG. Positions 154 and 174 each coordinate (7R,8Z)-bacteriochlorophyll b. The helical transmembrane segment at 171-200 threads the bilayer; that stretch reads NPAHMLAVTLFFTTTLALALHGGLILSACN. His191 provides a ligand contact to Fe cation. Phe217 is a binding site for a ubiquinone. The helical transmembrane segment at 226 to 252 threads the bilayer; the sequence is GTLGIHRLGYLLAINAGLWSAICIIIS. A Fe cation-binding site is contributed by His231.

The protein belongs to the reaction center PufL/M/PsbA/D family. In terms of assembly, reaction center is composed of four bacteriochlorophylls, two bacteriopheophytins, two ubiquinones, one iron, and three highly hydrophobic polypeptide chains (designated L, M, and H).

The protein localises to the cellular chromatophore membrane. In terms of biological role, the reaction center is a membrane-bound complex that mediates the initial photochemical event in the electron transfer process of photosynthesis. The sequence is that of Reaction center protein L chain (pufL) from Roseobacter denitrificans (strain ATCC 33942 / OCh 114) (Erythrobacter sp. (strain OCh 114)).